The chain runs to 447 residues: Phospholipase A(1) DAD1, chloroplastic (447 aa).

The N-terminal 46 residues, 1–46 (MRFSLSPVRPHSVVVPSLPKQDVVSYISGTTSNRQCRCVLTLPSPS), are a transit peptide targeting the chloroplast. A GXSXG motif is present at residues 293 to 297 (GHSLG). S295 serves as the catalytic Acyl-ester intermediate. Catalysis depends on charge relay system residues D352 and H418.

It belongs to the AB hydrolase superfamily. Lipase family. Expressed in flower buds, but not in leaves or roots. Restricted to the stamen filaments immediately before flower opening.

It is found in the plastid. The protein localises to the chloroplast. It carries out the reaction a 1,2-diacyl-sn-glycero-3-phosphocholine + H2O = a 2-acyl-sn-glycero-3-phosphocholine + a fatty acid + H(+). The enzyme catalyses 1-hexadecanoyl-2-(9Z,12Z-octadecadienoyl)-sn-glycero-3-phosphocholine + H2O = 2-(9Z,12Z-octadecadienoyl)-sn-glycero-3-phosphocholine + hexadecanoate + H(+). Sn-1-specific phospholipase that releases free fatty acids from phospholipids. Low activity on galactolipids and triacylglycerols. Catalyzes the initial step of jasmonic acid biosynthesis. Not essential for jasmonate biosynthesis after wounding or upon pathogen infection. In Arabidopsis thaliana (Mouse-ear cress), this protein is Phospholipase A(1) DAD1, chloroplastic.